Here is a 421-residue protein sequence, read N- to C-terminus: D-amino acid dehydrogenase (421 aa).

4–18 (VLVLGSGVVGLTSAW) contacts FAD.

Belongs to the DadA oxidoreductase family. It depends on FAD as a cofactor.

The catalysed reaction is a D-alpha-amino acid + A + H2O = a 2-oxocarboxylate + AH2 + NH4(+). In terms of biological role, oxidative deamination of D-amino acids. The sequence is that of D-amino acid dehydrogenase from Vibrio cholerae serotype O1 (strain ATCC 39315 / El Tor Inaba N16961).